The primary structure comprises 285 residues: 2-dehydro-3-deoxyphosphooctonate aldolase (285 aa).

Belongs to the KdsA family.

Its subcellular location is the cytoplasm. It carries out the reaction D-arabinose 5-phosphate + phosphoenolpyruvate + H2O = 3-deoxy-alpha-D-manno-2-octulosonate-8-phosphate + phosphate. It functions in the pathway carbohydrate biosynthesis; 3-deoxy-D-manno-octulosonate biosynthesis; 3-deoxy-D-manno-octulosonate from D-ribulose 5-phosphate: step 2/3. The protein operates within bacterial outer membrane biogenesis; lipopolysaccharide biosynthesis. The chain is 2-dehydro-3-deoxyphosphooctonate aldolase from Methylibium petroleiphilum (strain ATCC BAA-1232 / LMG 22953 / PM1).